Here is an 80-residue protein sequence, read N- to C-terminus: Small ribosomal subunit protein bS18 (80 aa).

It belongs to the bacterial ribosomal protein bS18 family. As to quaternary structure, part of the 30S ribosomal subunit. Forms a tight heterodimer with protein bS6.

Functionally, binds as a heterodimer with protein bS6 to the central domain of the 16S rRNA, where it helps stabilize the platform of the 30S subunit. The protein is Small ribosomal subunit protein bS18 of Staphylococcus carnosus (strain TM300).